Reading from the N-terminus, the 516-residue chain is uncharacterized protein (516 aa).

A run of 9 helical transmembrane segments spans residues 183–203 (SAAD…GDGV), 261–281 (VLKT…TYII), 308–328 (VMNG…TALL), 329–349 (LDHQ…AYSF), 356–376 (LLDV…GQVL), 379–399 (LAFS…LALA), 430–450 (LGHG…FLAL), 461–481 (PAWL…IWLL), and 492–512 (IVFA…ASAF).

It localises to the cell membrane. In terms of biological role, possible permease/transporter. This is an uncharacterized protein from Sinorhizobium fredii (strain NBRC 101917 / NGR234).